The chain runs to 291 residues: uncharacterized protein (291 aa).

4 helical membrane-spanning segments follow: residues 13 to 33, 84 to 104, 111 to 131, and 219 to 239; these read IILIVFSLVCLHWFFILSITI, IVLFICYILTFIFNLIMIGII, LLHLIIAILIWLAILYLFIII, and LIYCTYTIIGIIFIISFIYYL.

Its subcellular location is the cell membrane. This is an uncharacterized protein from Ureaplasma parvum serovar 3 (strain ATCC 700970).